The chain runs to 255 residues: uncharacterized protein (255 aa).

It belongs to the IIV-6 155L family.

This is an uncharacterized protein from Acheta domesticus (House cricket).